Consider the following 117-residue polypeptide: Large ribosomal subunit protein bL20 (117 aa).

This sequence belongs to the bacterial ribosomal protein bL20 family.

Functionally, binds directly to 23S ribosomal RNA and is necessary for the in vitro assembly process of the 50S ribosomal subunit. It is not involved in the protein synthesizing functions of that subunit. In Helicobacter hepaticus (strain ATCC 51449 / 3B1), this protein is Large ribosomal subunit protein bL20.